A 269-amino-acid polypeptide reads, in one-letter code: Probable sulfate transport system permease protein cysT (269 aa).

7 consecutive transmembrane segments (helical) span residues S10–L30, M60–V80, A92–V112, V130–V150, F179–F199, S208–F228, and T240–I260. The 202-residue stretch at Y54–V255 folds into the ABC transmembrane type-1 domain.

Belongs to the binding-protein-dependent transport system permease family. CysTW subfamily.

The protein resides in the plastid. The protein localises to the chloroplast membrane. In terms of biological role, part of the ABC transporter complex cysAWTP (TC 3.A.1.6.1) involved in sulfate/thiosulfate import. Probably responsible for the translocation of the substrate across the membrane. The polypeptide is Probable sulfate transport system permease protein cysT (cysT) (Mesostigma viride (Green alga)).